Here is a 417-residue protein sequence, read N- to C-terminus: Peptidyl-Asp metalloendopeptidase (417 aa).

Residues 1-25 form the signal peptide; that stretch reads MLSRSIGKAAGGLVLGLSVAAAAHA. Histidine 327 contributes to the Zn(2+) binding site. Glutamate 328 is a catalytic residue. Residues histidine 331 and histidine 337 each contribute to the Zn(2+) site.

The protein belongs to the peptidase M72 family. It depends on Zn(2+) as a cofactor.

The enzyme catalyses Cleavage of Xaa-|-Asp, Xaa-|-Glu and Xaa-|-cysteic acid bonds.. Metalloprotease, specifically cleaves on the N-terminal side of aspartyl, glutamyl and cysteic acid residues. The chain is Peptidyl-Asp metalloendopeptidase from Stenotrophomonas maltophilia (strain K279a).